The following is a 309-amino-acid chain: Homoserine O-succinyltransferase (309 aa).

Cys142 serves as the catalytic Acyl-thioester intermediate. The substrate site is built by Lys163 and Ser192. Catalysis depends on His235, which acts as the Proton acceptor. Residue Glu237 is part of the active site. Substrate is bound at residue Arg249.

This sequence belongs to the MetA family.

It localises to the cytoplasm. It carries out the reaction L-homoserine + succinyl-CoA = O-succinyl-L-homoserine + CoA. The protein operates within amino-acid biosynthesis; L-methionine biosynthesis via de novo pathway; O-succinyl-L-homoserine from L-homoserine: step 1/1. In terms of biological role, transfers a succinyl group from succinyl-CoA to L-homoserine, forming succinyl-L-homoserine. The sequence is that of Homoserine O-succinyltransferase from Serratia proteamaculans (strain 568).